The chain runs to 490 residues: Endoglucanase 13 (490 aa).

A signal peptide spans 1-26 (MSQLKNGSSQCLWTSICIVLIVMSMA). N-linked (GlcNAc...) asparagine glycosylation occurs at Asn6. The active-site Nucleophile is Asp86. Catalysis depends on residues His412, Asp464, and Glu473.

It belongs to the glycosyl hydrolase 9 (cellulase E) family.

The protein localises to the secreted. The enzyme catalyses Endohydrolysis of (1-&gt;4)-beta-D-glucosidic linkages in cellulose, lichenin and cereal beta-D-glucans.. The protein is Endoglucanase 13 of Arabidopsis thaliana (Mouse-ear cress).